Consider the following 127-residue polypeptide: MAKLSQDDLLAQFEEMTLIELSEFVKAFEEKFDVTAAAAVAVAGPAAPGAPVEAAAEQDEFDVILTGAGDKKIQVIKVVRELTSLGLKEAKDLVDGAPKPVLEKVAKDAAEKAAESLKGAGASVEVK.

The protein belongs to the bacterial ribosomal protein bL12 family. As to quaternary structure, homodimer. Part of the ribosomal stalk of the 50S ribosomal subunit. Forms a multimeric L10(L12)X complex, where L10 forms an elongated spine to which 2 to 4 L12 dimers bind in a sequential fashion. Binds GTP-bound translation factors.

Forms part of the ribosomal stalk which helps the ribosome interact with GTP-bound translation factors. Is thus essential for accurate translation. The sequence is that of Large ribosomal subunit protein bL12 from Streptomyces coelicolor (strain ATCC BAA-471 / A3(2) / M145).